Reading from the N-terminus, the 237-residue chain is Insulin-like growth factor-binding protein 6 (237 aa).

Positions 1–25 (MTPHRLLPPLLLTLLLAARPGGALA) are cleaved as a signal peptide. One can recognise an IGFBP N-terminal domain in the interval 26–105 (RCPGCGQGVS…LQGRGRCGRA (80 aa)). Disulfide bonds link Cys-27–Cys-30, Cys-38–Cys-42, Cys-55–Cys-61, Cys-69–Cys-82, and Cys-76–Cys-102. The interval 101-158 (RCGRARTPSGENPKESKPQAGTARSQDVNRRDQQRNSGTSTTPSRSNSGGVQDTEMGP) is disordered. The segment covering 135 to 151 (RNSGTSTTPSRSNSGGV) has biased composition (polar residues). The region spanning 156-231 (MGPCRKHLDS…SEGGDGSSLC (76 aa)) is the Thyroglobulin type-1 domain. 3 cysteine pairs are disulfide-bonded: Cys-159/Cys-186, Cys-197/Cys-208, and Cys-210/Cys-231. The interval 215 to 237 (GQPLPGSSEGGDGSSLCPTGSSG) is disordered.

In terms of assembly, interacts (via C-terminal domain) with PHB2. In terms of processing, O-glycosylated.

It is found in the secreted. Functionally, IGF-binding proteins prolong the half-life of the IGFs and have been shown to either inhibit or stimulate the growth promoting effects of the IGFs on cell culture. They alter the interaction of IGFs with their cell surface receptors. Activates the MAPK signaling pathway and induces cell migration. This chain is Insulin-like growth factor-binding protein 6 (IGFBP6), found in Bos taurus (Bovine).